Here is a 119-residue protein sequence, read N- to C-terminus: Ribonuclease P protein component (119 aa).

This sequence belongs to the RnpA family. As to quaternary structure, consists of a catalytic RNA component (M1 or rnpB) and a protein subunit.

The enzyme catalyses Endonucleolytic cleavage of RNA, removing 5'-extranucleotides from tRNA precursor.. Its function is as follows. RNaseP catalyzes the removal of the 5'-leader sequence from pre-tRNA to produce the mature 5'-terminus. It can also cleave other RNA substrates such as 4.5S RNA. The protein component plays an auxiliary but essential role in vivo by binding to the 5'-leader sequence and broadening the substrate specificity of the ribozyme. The protein is Ribonuclease P protein component of Corynebacterium diphtheriae (strain ATCC 700971 / NCTC 13129 / Biotype gravis).